The chain runs to 243 residues: 1-(5-phosphoribosyl)-5-[(5-phosphoribosylamino)methylideneamino] imidazole-4-carboxamide isomerase (243 aa).

D8 functions as the Proton acceptor in the catalytic mechanism. The Proton donor role is filled by D129.

This sequence belongs to the HisA/HisF family.

The protein localises to the cytoplasm. It carries out the reaction 1-(5-phospho-beta-D-ribosyl)-5-[(5-phospho-beta-D-ribosylamino)methylideneamino]imidazole-4-carboxamide = 5-[(5-phospho-1-deoxy-D-ribulos-1-ylimino)methylamino]-1-(5-phospho-beta-D-ribosyl)imidazole-4-carboxamide. It functions in the pathway amino-acid biosynthesis; L-histidine biosynthesis; L-histidine from 5-phospho-alpha-D-ribose 1-diphosphate: step 4/9. The chain is 1-(5-phosphoribosyl)-5-[(5-phosphoribosylamino)methylideneamino] imidazole-4-carboxamide isomerase from Brucella suis biovar 1 (strain 1330).